A 410-amino-acid chain; its full sequence is Serine proteinase inhibitor A3K (410 aa).

The signal sequence occupies residues 1–24 (MPSAISRGLLLLAGLCYLVFGIMA). 5 N-linked (GlcNAc...) asparagine glycosylation sites follow: Asn-62, Asn-99, Asn-162, Asn-229, and Asn-263. The segment at 360–381 (GTEAAAATVLEATRTARPPRLS) is RCL.

It belongs to the serpin family.

It localises to the secreted. Its subcellular location is the extracellular space. Its function is as follows. Contrapsin inhibits trypsin-like proteases. In Cavia porcellus (Guinea pig), this protein is Serine proteinase inhibitor A3K (SERPINA3K).